Consider the following 214-residue polypeptide: MTHITGTLYIISAPSGAGKTSLVKALMDAQQEPQHGAQAKIRVSVSHTTRAMRPGEVNGVNYNFVDRAEFVRMIEHGDFLEQAEVFGNLYGTSQSHLQQTLDEGHDLILEIDWQGARQVRAQMPQARSIFILPPTQQALRQRLTNRGQDSDEIIEARMREAVSEMSHYNEYEYVVVNDDFAGALEDLKAIFRANRLTQQHQQEQYSELFQELLA.

Positions 6-192 constitute a Guanylate kinase-like domain; that stretch reads GTLYIISAPS…ALEDLKAIFR (187 aa). 13 to 20 is an ATP binding site; the sequence is APSGAGKT.

The protein belongs to the guanylate kinase family.

It is found in the cytoplasm. It carries out the reaction GMP + ATP = GDP + ADP. Functionally, essential for recycling GMP and indirectly, cGMP. This is Guanylate kinase from Pseudomonas savastanoi pv. phaseolicola (strain 1448A / Race 6) (Pseudomonas syringae pv. phaseolicola (strain 1448A / Race 6)).